Consider the following 195-residue polypeptide: UPF0157 protein BH1888 (195 aa).

Polar residues predominate over residues 1–12; it reads MPPMKDSSNSTP. Residues 1-21 form a disordered region; it reads MPPMKDSSNSTPRTDEELQEV.

The protein belongs to the UPF0157 (GrpB) family.

This chain is UPF0157 protein BH1888, found in Halalkalibacterium halodurans (strain ATCC BAA-125 / DSM 18197 / FERM 7344 / JCM 9153 / C-125) (Bacillus halodurans).